The sequence spans 540 residues: FAD-binding monooxygenase lolF2 (540 aa).

Residues 43–46 (VWRE) and 55–58 (DSLF) each bind FAD. Residues 53–55 (AVD), 182–188 (TGPSGVQ), and 205–206 (QS) contribute to the NADP(+) site.

This sequence belongs to the FAD-binding monooxygenase family. FAD is required as a cofactor.

It participates in alkaloid biosynthesis. Functionally, FAD-binding monooxygenase; part of the gene cluster that mediates the biosynthesis of loline alkaloids, potent insecticidal agents composed of a pyrrolizidine ring system and an uncommon ether bridge linking carbons 2 and 7. Lolines are structurally differentiated by the various modifications of the L-amino group and include norloline, loline, N-methylloline, N-acetylloline, N-acetylnorloline, and N-formylloline. The first committed step is the condensation of O-acetyl-L-homoserine (derived from L-aspartic acid) and L-proline, probably catalyzed by the gamma-type pyridoxal 5'-phosphate(PLP)-dependent enzyme lolC, to give the diamino diacid, NACPP. Ensuing cyclization, decarboxylation, and acetylation steps yield 1-exo-acetamidopyrrolizidine (AcAP). LolO is required for installation of the ether bridge upon the pathway intermediate, 1-exo-acetamidopyrrolizidine (AcAP). In sequential 2-oxoglutarate- and O(2)-consuming steps, lolO removes hydrogens from C2 and C7 of AcAP to form both carbon-oxygen bonds in N-acetylnorloline (NANL), the precursor to all other lolines. The enzymes lolD, lolE, lolF and lolT have also been proposed to be involved in the ether-bridge installation. Further processing of the exocyclic moiety of NANL by fungal N-acetamidase (LolN), methyltransferase (LolM), and cytochrome P450 (LolP) enzymes, with occasional involvement of a plant acetyltransferase, generates the other known lolines. LolN transforms NANL to norlonine which is monomethylated and dimethylated to respectively lonine and N-methyllonine (NML) by lolM. LolP catalyzes hydroxylation of the methyl group in N-methylloline (NML) and further oxygenation to N-formylloline (NFL). A plant acetyltransferase is responsible for the acetylation of loline to form N-acetylloline (NAL). LolA might interact with aspartate kinase to prevent feedback inhibition of its activity by these end products and thereby promote production of l-homoserine from l-aspartate. The protein is FAD-binding monooxygenase lolF2 of Epichloe uncinata (Endophyte fungus).